The sequence spans 657 residues: Forkhead box protein O3 (657 aa).

Disordered stretches follow at residues 1–71 (MAEA…EGAA) and 216–320 (SSWW…ELDD). A DNA-binding region (fork-head) is located at residues 142–236 (WGNMSYADLI…KGGKAPRRRA (95 aa)). Basic residues predominate over residues 246–257 (TKSRGRAAKKKA). Residues 268–283 (DSPSQLSKWPGSPTSR) show a composition bias toward polar residues. The segment covering 284–296 (SSDKLDTWTDFRS) has biased composition (basic and acidic residues). The segment covering 297–307 (RTNSNASTISG) has biased composition (polar residues).

Post-translationally, dephosphorylation may promote translocation to the nucleus where the protein induces transcription of target genes and triggers apoptosis. In terms of tissue distribution, localized to the animal hemisphere during early cleavage stages. At the late neurula, localized in the anterior neural plate, neural crest cells and in the hatching gland. As development progresses, expression becomes less localized, being observed in a variety of organs and tissues including the head, branchial arches and somites by stage 32.

Its subcellular location is the cytoplasm. It localises to the cytosol. The protein resides in the nucleus. In terms of biological role, transcriptional activator that recognizes and binds to the DNA sequence 5'-[AG]TAAA[TC]A-3' and regulates different processes, such as apoptosis and autophagy. Acts as a positive regulator of autophagy in skeletal muscle: in starved cells, enters the nucleus following dephosphorylation and binds the promoters of autophagy genes, thereby activating their expression, resulting in proteolysis of skeletal muscle proteins. Triggers apoptosis in the absence of survival factors, including neuronal cell death upon oxidative stress. In response to metabolic stress, translocates into the mitochondria where it promotes mtDNA transcription. Also acts as a key regulator of chondrogenic commitment of skeletal progenitor cells in response to lipid availability: when lipids levels are low, translocates to the nucleus and promotes expression of sox9, which induces chondrogenic commitment and suppresses fatty acid oxidation. Also acts as a key regulator of regulatory T-cells (Treg) differentiation. The protein is Forkhead box protein O3 of Xenopus laevis (African clawed frog).